The primary structure comprises 487 residues: Lysine--tRNA ligase (487 aa).

E398 and E405 together coordinate Mg(2+).

This sequence belongs to the class-II aminoacyl-tRNA synthetase family. In terms of assembly, homodimer. Mg(2+) is required as a cofactor.

It localises to the cytoplasm. The catalysed reaction is tRNA(Lys) + L-lysine + ATP = L-lysyl-tRNA(Lys) + AMP + diphosphate. This chain is Lysine--tRNA ligase, found in Mycoplasma mobile (strain ATCC 43663 / 163K / NCTC 11711) (Mesomycoplasma mobile).